We begin with the raw amino-acid sequence, 60 residues long: Large ribosomal subunit protein bL32 (60 aa).

Positions methionine 1–glutamate 60 are disordered. Over residues serine 11–leucine 22 the composition is skewed to basic and acidic residues.

Belongs to the bacterial ribosomal protein bL32 family.

In Ectopseudomonas mendocina (strain ymp) (Pseudomonas mendocina), this protein is Large ribosomal subunit protein bL32.